We begin with the raw amino-acid sequence, 872 residues long: uncharacterized protein (872 aa).

A coiled-coil region spans residues 496–524 (LQQHHQDISAMQQQILEEKNQLRRATIDV). 2 disordered regions span residues 595–736 (RPAV…SVQQ) and 844–872 (TKEN…PQAV). 2 stretches are compositionally biased toward polar residues: residues 615–659 (QNGN…QTTF) and 670–686 (PYAS…NNVV). Positions 687–736 (QQYQSYYDNPSNQQSNQQSNQQSNQQPNQQPNQQPNQQPNQQPNQQSVQQ) are enriched in low complexity.

It is found in the virion. This is an uncharacterized protein from Acanthamoeba polyphaga mimivirus (APMV).